Consider the following 1205-residue polypeptide: MRKPRRKSRQNAEGRRSPSPYSLKCSPTRETLTYAQAQRIVEVDIDGRLHRISIYDPLKIITEDELTAQDITECNSNKENSEQPQFPGKSKKPSSKGKKKESCSKHASGTSFHLPQPSFRMVDSGIQPEAPPLPAAYYRYIEKPPEDLDAEVEYDMDEEDLAWLDMVNEKRRVDGHSLVSADTFELLVDRLEKESYLESRSSGAQQSLIDEDAFCCVCLDDECHNSNVILFCDICNLAVHQECYGVPYIPEGQWLCRCCLQSPSRPVDCILCPNKGGAFKQTSDGHWAHVVCAIWIPEVCFANTVFLEPIEGIDNIPPARWKLTCYICKQKGLGAAIQCHKVNCYTAFHVTCAQRAGLFMKIEPMRETSLNGTIFTVRKTAYCEAHSPPGAATARRKGDSPRSISETGDEEGLKEGDGEEEEEEEVEEEEQEAQGGVSGSLKGVPKKSKMSLKQKIKKEPEEAGQDTPSTLPMLAVPQIPSYRLNKICSGLSFQRKNQFMQRLHNYWLLKRQARNGVPLIRRLHSHLQSQRNAEQREQDEKTSAVKEELKYWQKLRHDLERARLLIELIRKREKLKREQVKVQQAAMELELMPFNVLLRTTLDLLQEKDPAHIFAEPVNLSEVPDYLEFISKPMDFSTMRRKLESHLYRTLEEFEEDFNLIVTNCMKYNAKDTIFHRAAVRLRDLGGAILRHARRQAENIGYDPERGTHLPESPKLEDFYRFSWEDVDNILIPENRAHLSPEVQLKELLEKLDLVSAMRSSGARTRRVRLLRREINALRQKLAQPPPPQPPSLNKTVSNGELPAGPQGDAAVLEQALQEEPEDDGDRDDSKLPPPPTLEPTGPAPSLSEQESPPEPPTLKPINDSKPPSRFLKPRKVEEDELLEKSPLQLGNEPLQRLLSDNGINRLSLMAPDTPAGTPLSGVGRRTSVLFKKAKNGVKLQRSPDRVLENGEDHGVAGSPASPASIEEERHSRKRPRSRSCSESEGERSPQQEEETGMTNGFGKHTESGSDSECSLGLSGGLAFEACSGLTPPKRSRGKPALSRVPFLEGVNGDSDYNGSGRSLLLPFEDRGDLEPLELVWAKCRGYPSYPALIIDPKMPREGLLHNGVPIPVPPLDVLKLGEQKQAEAGEKLFLVLFFDNKRTWQWLPRDKVLPLGVEDTVDKLKMLEGRKTSIRKSVQVAYDRAMIHLSRVRGPHSFVTSSYL.

Disordered regions lie at residues 1–27 and 75–121; these read MRKPRRKSRQNAEGRRSPSPYSLKCSP and NSNK…SFRM. Phosphoserine is present on Ser17. Residues 75-84 show a composition bias toward polar residues; that stretch reads NSNKENSEQP. Positions 89–99 are enriched in basic residues; it reads KSKKPSSKGKK. The PHD-type 1 zinc finger occupies 212 to 262; the sequence is DAFCCVCLDDECHNSNVILFCDICNLAVHQECYGVPYIPEGQWLCRCCLQS. The segment at 266 to 299 adopts a C2HC pre-PHD-type zinc-finger fold; it reads PVDCILCPNKGGAFKQTSDGHWAHVVCAIWIPEV. The PHD-type 2 zinc-finger motif lies at 323-387; sequence LTCYICKQKG…RKTAYCEAHS (65 aa). The tract at residues 387–472 is disordered; sequence SPPGAATARR…AGQDTPSTLP (86 aa). Phosphoserine occurs at positions 400 and 403. Residues 417-432 are compositionally biased toward acidic residues; that stretch reads DGEEEEEEEVEEEEQE. The span at 444 to 456 shows a compositional bias: basic residues; sequence VPKKSKMSLKQKI. Lys447, Lys449, and Lys671 each carry N6-acetyllysine. A Bromo domain is found at 589–693; the sequence is LELMPFNVLL…DLGGAILRHA (105 aa). Residues Ser713 and Ser740 each carry the phosphoserine modification. Residues 779–897 form a disordered region; it reads RQKLAQPPPP…LQLGNEPLQR (119 aa). The span at 817 to 827 shows a compositional bias: acidic residues; the sequence is LQEEPEDDGDR. A compositionally biased stretch (low complexity) spans 839–851; it reads EPTGPAPSLSEQE. At Ser900 the chain carries Phosphoserine. 2 disordered regions span residues 907-926 and 931-1015; these read LSLMAPDTPAGTPLSGVGRR and FKKA…SECS. Over residues 942-955 the composition is skewed to basic and acidic residues; sequence RSPDRVLENGEDHG. Phosphoserine is present on residues Ser962 and Ser965. A compositionally biased stretch (basic and acidic residues) spans 980–991; the sequence is SCSESEGERSPQ. One can recognise a PWWP domain in the interval 1076–1159; it reads PLELVWAKCR…RDKVLPLGVE (84 aa).

Component of some HBO1 complex composed of KAT7/HBO1, MEAF6, ING4 or ING5, and BRPF3. Component of the MOZ/MORF complex composed at least of ING5, KAT6A, KAT6B, MEAF6 and one of BRPF1, BRD1/BRPF2 and BRPF3. Interacts with KAT7/HBO1; the interaction is direct.

Its subcellular location is the nucleus. In terms of biological role, scaffold subunit of various histone acetyltransferase (HAT) complexes, such as the MOZ/MORF and HBO1 complexes, which have a histone H3 acetyltransferase activity. Plays a role in DNA replication initiation by directing KAT7/HBO1 specificity towards histone H3 'Lys-14' acetylation (H3K14ac), thereby facilitating the activation of replication origins. Component of the MOZ/MORF complex which has a histone H3 acetyltransferase activity. The polypeptide is Bromodomain and PHD finger-containing protein 3 (Homo sapiens (Human)).